Reading from the N-terminus, the 481-residue chain is ATP synthase subunit beta (481 aa).

ATP is bound at residue 160-167 (GGAGVGKT).

It belongs to the ATPase alpha/beta chains family. F-type ATPases have 2 components, CF(1) - the catalytic core - and CF(0) - the membrane proton channel. CF(1) has five subunits: alpha(3), beta(3), gamma(1), delta(1), epsilon(1). CF(0) has three main subunits: a(1), b(2) and c(9-12). The alpha and beta chains form an alternating ring which encloses part of the gamma chain. CF(1) is attached to CF(0) by a central stalk formed by the gamma and epsilon chains, while a peripheral stalk is formed by the delta and b chains.

It localises to the cell inner membrane. It catalyses the reaction ATP + H2O + 4 H(+)(in) = ADP + phosphate + 5 H(+)(out). In terms of biological role, produces ATP from ADP in the presence of a proton gradient across the membrane. The catalytic sites are hosted primarily by the beta subunits. This is ATP synthase subunit beta from Myxococcus xanthus (strain DK1622).